Consider the following 346-residue polypeptide: Inner membrane protein YnjI (346 aa).

Over 1 to 38 the chain is Periplasmic; the sequence is MKKVLLQNHPGSEKYSFNGWEIFNSNFERMIKENKAML. Residues 39 to 59 traverse the membrane as a helical segment; it reads LCKWGFYLTCVVAVMFVFAAI. Residues 60–68 lie on the Cytoplasmic side of the membrane; sequence TSNGLNERG. Residues 69–89 traverse the membrane as a helical segment; the sequence is LITAGCSFLYLLIMMGLIVRA. Residues 90–234 are Periplasmic-facing; that stretch reads GFKAKKEQLH…DCANHSSGKS (145 aa). The helical transmembrane segment at 235-255 threads the bilayer; sequence SAKLIWAAELSWMISISSTAF. At 256–346 the chain is on the cytoplasmic side; sequence QNGTIEEELA…PWGASSVKYS (91 aa).

Its subcellular location is the cell inner membrane. The sequence is that of Inner membrane protein YnjI (ynjI) from Escherichia coli (strain K12).